The following is a 323-amino-acid chain: DNA-directed RNA polymerase subunit alpha (323 aa).

The tract at residues 1–225 (MLDIAMPKIE…QYSQTIADFN (225 aa)) is alpha N-terminal domain (alpha-NTD). The tract at residues 246–323 (IYDTPIEELD…SHAARAEIEG (78 aa)) is alpha C-terminal domain (alpha-CTD).

It belongs to the RNA polymerase alpha chain family. As to quaternary structure, homodimer. The RNAP catalytic core consists of 2 alpha, 1 beta, 1 beta' and 1 omega subunit. When a sigma factor is associated with the core the holoenzyme is formed, which can initiate transcription.

The enzyme catalyses RNA(n) + a ribonucleoside 5'-triphosphate = RNA(n+1) + diphosphate. Functionally, DNA-dependent RNA polymerase catalyzes the transcription of DNA into RNA using the four ribonucleoside triphosphates as substrates. The polypeptide is DNA-directed RNA polymerase subunit alpha (Roseiflexus sp. (strain RS-1)).